A 371-amino-acid chain; its full sequence is Putative glutamate--cysteine ligase 2 (371 aa).

The protein belongs to the glutamate--cysteine ligase type 2 family. YbdK subfamily.

The enzyme catalyses L-cysteine + L-glutamate + ATP = gamma-L-glutamyl-L-cysteine + ADP + phosphate + H(+). Functionally, ATP-dependent carboxylate-amine ligase which exhibits weak glutamate--cysteine ligase activity. This is Putative glutamate--cysteine ligase 2 from Cupriavidus pinatubonensis (strain JMP 134 / LMG 1197) (Cupriavidus necator (strain JMP 134)).